The following is a 1340-amino-acid chain: Protein SHORT ROOT IN SALT MEDIUM 1 (1340 aa).

6 disordered regions span residues Met1–Leu73, Tyr161–Ser185, Glu357–Ser473, Thr723–Val750, Pro784–Ala990, and Arg1063–Glu1269. Residues Ser7–Gly39 show a composition bias toward low complexity. Residues Gln46–Pro60 show a composition bias toward polar residues. Composition is skewed to basic and acidic residues over residues Leu173–Ala182, Glu357–Ile470, and Thr723–Pro735. Positions Leu355–Lys426 form a coiled coil. Over residues Gly810–Pro824 the composition is skewed to polar residues. Residues Ile828–Arg840 are compositionally biased toward basic residues. Basic and acidic residues-rich tracts occupy residues Lys841 to Ser872, Glu887 to Pro988, His1069 to Ala1097, and Pro1105 to Gly1138. Positions Leu1052–Arg1086 form a coiled coil. Over residues Glu1153–Glu1204 the composition is skewed to acidic residues. Basic and acidic residues-rich tracts occupy residues Glu1205–Glu1214 and Thr1229–Gln1257. The region spanning Thr1270–Phe1305 is the EF-hand domain.

In terms of assembly, interacts with BHLH148/RITF1. In terms of tissue distribution, expressed ubiquitously at high levels, including in guard cells.

It localises to the nucleus. Required for salt tolerance and sodium (Na) homeostasis after salt stress. Together with BHLH148/RITF1, regulates the transcription of several genes involved in the detoxification of reactive oxygen species (ROS) generated by salt (NaCl) stress. Binds calcium. This chain is Protein SHORT ROOT IN SALT MEDIUM 1, found in Arabidopsis thaliana (Mouse-ear cress).